Consider the following 166-residue polypeptide: Probable chemoreceptor glutamine deamidase CheD (166 aa).

It belongs to the CheD family.

The enzyme catalyses L-glutaminyl-[protein] + H2O = L-glutamyl-[protein] + NH4(+). Its function is as follows. Probably deamidates glutamine residues to glutamate on methyl-accepting chemotaxis receptors (MCPs), playing an important role in chemotaxis. This is Probable chemoreceptor glutamine deamidase CheD from Clostridium acetobutylicum (strain ATCC 824 / DSM 792 / JCM 1419 / IAM 19013 / LMG 5710 / NBRC 13948 / NRRL B-527 / VKM B-1787 / 2291 / W).